Consider the following 287-residue polypeptide: Ribonuclease Z (287 aa).

Positions 64, 66, 68, 69, 124, 191, and 250 each coordinate Zn(2+). The active-site Proton acceptor is the aspartate 68.

It belongs to the RNase Z family. In terms of assembly, homodimer. Zn(2+) serves as cofactor.

The enzyme catalyses Endonucleolytic cleavage of RNA, removing extra 3' nucleotides from tRNA precursor, generating 3' termini of tRNAs. A 3'-hydroxy group is left at the tRNA terminus and a 5'-phosphoryl group is left at the trailer molecule.. Its function is as follows. Zinc phosphodiesterase, which displays some tRNA 3'-processing endonuclease activity. Probably involved in tRNA maturation, by removing a 3'-trailer from precursor tRNA. In Pyrobaculum neutrophilum (strain DSM 2338 / JCM 9278 / NBRC 100436 / V24Sta) (Thermoproteus neutrophilus), this protein is Ribonuclease Z.